The chain runs to 161 residues: Allophycocyanin beta chain (161 aa).

N71 carries the post-translational modification N4-methylasparagine. C81 is a binding site for (2R,3E)-phycocyanobilin.

Belongs to the phycobiliprotein family. As to quaternary structure, heterodimer of an alpha and a beta chain. Post-translationally, contains one covalently linked phycocyanobilin chromophore.

Its subcellular location is the cellular thylakoid membrane. Its function is as follows. Light-harvesting photosynthetic bile pigment-protein from the phycobiliprotein complex. Allophycocyanin has a maximum absorption at approximately 650 nanometers. This chain is Allophycocyanin beta chain (apcB), found in Synechocystis sp. (strain ATCC 27184 / PCC 6803 / Kazusa).